The sequence spans 352 residues: Putative [LysW]-L-2-aminoadipate 6-phosphate reductase (352 aa).

An NADP(+)-binding site is contributed by 11 to 14 (SGYT). Cys-148 is a catalytic residue. Asn-319 is an NADP(+) binding site.

It belongs to the NAGSA dehydrogenase family. Type 1 subfamily. LysY sub-subfamily.

Its subcellular location is the cytoplasm. It catalyses the reaction [amino-group carrier protein]-C-terminal-N-(1-carboxy-5-oxopentan-1-yl)-L-glutamine + phosphate + NADP(+) = [amino-group carrier protein]-C-terminal-N-(1-carboxy-5-phosphooxy-5-oxopentan-1-yl)-L-glutamine + NADPH + H(+). The protein operates within amino-acid biosynthesis; L-lysine biosynthesis via AAA pathway; L-lysine from L-alpha-aminoadipate (Thermus route): step 3/5. In terms of biological role, catalyzes the NADPH-dependent reduction of [LysW]-aminoadipate 6-phosphate to yield [LysW]-aminoadipate 6-semialdehyde. In Thermomicrobium roseum (strain ATCC 27502 / DSM 5159 / P-2), this protein is Putative [LysW]-L-2-aminoadipate 6-phosphate reductase.